Here is a 244-residue protein sequence, read N- to C-terminus: Probable transcriptional regulatory protein XF_1906 (244 aa).

This sequence belongs to the TACO1 family.

It is found in the cytoplasm. This chain is Probable transcriptional regulatory protein XF_1906, found in Xylella fastidiosa (strain 9a5c).